A 367-amino-acid chain; its full sequence is Chorismate synthase (367 aa).

The NADP(+) site is built by arginine 48 and arginine 54. Residues 125–127, 238–239, glycine 278, 293–297, and arginine 319 contribute to the FMN site; these read RSS, NA, and KPTSS.

It belongs to the chorismate synthase family. Homotetramer. FMNH2 is required as a cofactor.

The catalysed reaction is 5-O-(1-carboxyvinyl)-3-phosphoshikimate = chorismate + phosphate. It participates in metabolic intermediate biosynthesis; chorismate biosynthesis; chorismate from D-erythrose 4-phosphate and phosphoenolpyruvate: step 7/7. In terms of biological role, catalyzes the anti-1,4-elimination of the C-3 phosphate and the C-6 proR hydrogen from 5-enolpyruvylshikimate-3-phosphate (EPSP) to yield chorismate, which is the branch point compound that serves as the starting substrate for the three terminal pathways of aromatic amino acid biosynthesis. This reaction introduces a second double bond into the aromatic ring system. The chain is Chorismate synthase from Stenotrophomonas maltophilia (strain K279a).